Reading from the N-terminus, the 594-residue chain is Kelch domain-containing protein 7B (594 aa).

Positions Met1 to Glu174 are disordered. Gly residues predominate over residues Ile49–Glu58. A compositionally biased stretch (polar residues) spans Gln64–Pro74. Pro residues predominate over residues Pro104 to Pro115. The segment covering Ala116–Pro126 has biased composition (low complexity). 5 Kelch repeats span residues Glu306–Asn354, Tyr355–Gly405, Leu406–Cys448, Asp451–Gly493, and Leu495–Gly538.

The sequence is that of Kelch domain-containing protein 7B (KLHDC7B) from Homo sapiens (Human).